Reading from the N-terminus, the 121-residue chain is UPF0102 protein Hhal_2103 (121 aa).

The interval 1 to 20 is disordered; sequence MMAPQTTRNDPRQRGQEAEE. The span at 9–20 shows a compositional bias: basic and acidic residues; the sequence is NDPRQRGQEAEE.

The protein belongs to the UPF0102 family.

This Halorhodospira halophila (strain DSM 244 / SL1) (Ectothiorhodospira halophila (strain DSM 244 / SL1)) protein is UPF0102 protein Hhal_2103.